A 96-amino-acid chain; its full sequence is UPF0235 protein VP2619 (96 aa).

Belongs to the UPF0235 family.

The polypeptide is UPF0235 protein VP2619 (Vibrio parahaemolyticus serotype O3:K6 (strain RIMD 2210633)).